Consider the following 194-residue polypeptide: Dof zinc finger protein DOF4.2 (194 aa).

The Dof-type zinc finger occupies 21–75 (RVCPRCYSDQTRFSYFNNNKKSQPRYKCKNCCRCWTHGGVLRNIPVTGICDKSNL). Residues C23, C26, C48, and C51 each contribute to the Zn(2+) site.

The protein localises to the nucleus. In terms of biological role, transcription factor that binds specifically to a 5'-AA[AG]G-3' consensus core sequence. In Arabidopsis thaliana (Mouse-ear cress), this protein is Dof zinc finger protein DOF4.2 (DOF4.2).